Consider the following 593-residue polypeptide: uncharacterized protein (593 aa).

This is an uncharacterized protein from Sinorhizobium fredii (strain NBRC 101917 / NGR234).